The primary structure comprises 119 residues: Large ribosomal subunit protein uL18 (119 aa).

The segment at 1–20 is disordered; that stretch reads MSQIDKASRRQKIKDRSRVK. A compositionally biased stretch (basic residues) spans 9–20; that stretch reads RRQKIKDRSRVK.

This sequence belongs to the universal ribosomal protein uL18 family. As to quaternary structure, part of the 50S ribosomal subunit; part of the 5S rRNA/L5/L18/L25 subcomplex. Contacts the 5S and 23S rRNAs.

This is one of the proteins that bind and probably mediate the attachment of the 5S RNA into the large ribosomal subunit, where it forms part of the central protuberance. In Chlorobium phaeobacteroides (strain DSM 266 / SMG 266 / 2430), this protein is Large ribosomal subunit protein uL18.